A 193-amino-acid polypeptide reads, in one-letter code: Selenoprotein S A (193 aa).

The helical transmembrane segment at 29–49 (WALASYGWYILFGCIILYFLI) threads the bilayer. The segment covering 114-125 (IETWDRMQEGKS) has biased composition (basic and acidic residues). The disordered stretch occupies residues 114 to 193 (IETWDRMQEG…RRGPSSGGUG (80 aa)). A compositionally biased stretch (low complexity) spans 137 to 153 (SPSTSASSSPSTSSSAP). Position 192 (selenocysteine 192) is a non-standard amino acid, selenocysteine.

The protein belongs to the selenoprotein S family.

Its subcellular location is the endoplasmic reticulum membrane. It localises to the cytoplasm. In terms of biological role, involved in the degradation process of misfolded endoplasmic reticulum (ER) luminal proteins. Participates in the transfer of misfolded proteins from the ER to the cytosol, where they are destroyed by the proteasome in a ubiquitin-dependent manner. The polypeptide is Selenoprotein S A (vimp-a) (Xenopus laevis (African clawed frog)).